A 194-amino-acid polypeptide reads, in one-letter code: Fatty acid metabolism regulator protein (194 aa).

Positions 5–65 (RPKYMQIIDA…SLFKEKMGQF (61 aa)) constitute an HTH tetR-type domain. The H-T-H motif DNA-binding region spans 28–47 (QVSKIAKQAGVADGTIYLYF).

In terms of assembly, homodimer. Binds to DNA.

The protein localises to the cytoplasm. Its function is as follows. Transcriptional regulator in fatty acid degradation. Represses transcription of genes required for fatty acid transport and beta-oxidation, including acdA, fadA, fadB, fadE, fadF, fadG, fadH, fadM, fadN, lcfA and lcfB. Binding of FadR to DNA is specifically inhibited by long chain fatty acyl-CoA compounds of 14-20 carbon atoms in length. The polypeptide is Fatty acid metabolism regulator protein (fadR) (Bacillus subtilis (strain 168)).